Here is a 207-residue protein sequence, read N- to C-terminus: 3-isopropylmalate dehydratase small subunit (207 aa).

It belongs to the LeuD family. LeuD type 1 subfamily. In terms of assembly, heterodimer of LeuC and LeuD.

The catalysed reaction is (2R,3S)-3-isopropylmalate = (2S)-2-isopropylmalate. It functions in the pathway amino-acid biosynthesis; L-leucine biosynthesis; L-leucine from 3-methyl-2-oxobutanoate: step 2/4. Its function is as follows. Catalyzes the isomerization between 2-isopropylmalate and 3-isopropylmalate, via the formation of 2-isopropylmaleate. This Gluconacetobacter diazotrophicus (strain ATCC 49037 / DSM 5601 / CCUG 37298 / CIP 103539 / LMG 7603 / PAl5) protein is 3-isopropylmalate dehydratase small subunit.